A 358-amino-acid polypeptide reads, in one-letter code: Peptide chain release factor 1 (358 aa).

Glutamine 235 bears the N5-methylglutamine mark.

Belongs to the prokaryotic/mitochondrial release factor family. Post-translationally, methylated by PrmC. Methylation increases the termination efficiency of RF1.

The protein localises to the cytoplasm. Its function is as follows. Peptide chain release factor 1 directs the termination of translation in response to the peptide chain termination codons UAG and UAA. In Neisseria gonorrhoeae (strain NCCP11945), this protein is Peptide chain release factor 1.